We begin with the raw amino-acid sequence, 331 residues long: NmrA-like family domain-containing oxidoreductase himF (331 aa).

Residues 8-13, 34-38, 55-56, 76-78, K133, and 155-167 each bind NADP(+); these read GATGNQ, RNAES, DG, TNG, and WFFE…QMAA.

The protein belongs to the NmrA-type oxidoreductase family.

It participates in secondary metabolite biosynthesis. Functionally, nmrA-like family domain-containing oxidoreductase; part of the him gene cluster that mediates the biosynthesis of himeic acid A, a ubiquitin-activating enzyme (E1) inhibitor. First, himA, together with the trans-enoyl reductase himH, catalyzes the formation of apolyketide chain, which is then condensed with leucine by the NRPS activity of himA. Dieckmann cyclization and release from himA gives a tetramic acid intermediate as the product of himA PKS-NRPS. HimG then catalyzes alpha-oxidation of the tetramic acid ring, with a subsequent rearrangement to yield apyrone intermediate. Two terminal methyl groups of polyketide and amide side chains are oxidized to carboxylic acids by himC cytochrome P450 monooxygenase to form himeic acid A. Himeic acid A is further converted to himeic acid B and C during culture growth. No gene responsible for pyrone to pyridone conversion was found in the him gene cluster and himeic acid A is non-enzymatically converted to himeic acid C by the incorporation of an ammonium nitrogen atom in a pH5 buffer, and to himeic acid B at a conversion ratio of 50% during incubation in MeOH for 5 days. The sequence is that of NmrA-like family domain-containing oxidoreductase himF from Aspergillus japonicus.